The primary structure comprises 229 residues: Aminopyrimidine aminohydrolase (229 aa).

Asp44 provides a ligand contact to substrate. Residue Cys137 is the Nucleophile of the active site. Positions 141 and 167 each coordinate substrate. Glu208 functions as the Proton donor in the catalytic mechanism.

It belongs to the TenA family. Homotetramer.

It carries out the reaction 4-amino-5-aminomethyl-2-methylpyrimidine + H2O = 4-amino-5-hydroxymethyl-2-methylpyrimidine + NH4(+). The catalysed reaction is thiamine + H2O = 5-(2-hydroxyethyl)-4-methylthiazole + 4-amino-5-hydroxymethyl-2-methylpyrimidine + H(+). It functions in the pathway cofactor biosynthesis; thiamine diphosphate biosynthesis. Its function is as follows. Catalyzes an amino-pyrimidine hydrolysis reaction at the C5' of the pyrimidine moiety of thiamine compounds, a reaction that is part of a thiamine salvage pathway. Thus, catalyzes the conversion of 4-amino-5-aminomethyl-2-methylpyrimidine to 4-amino-5-hydroxymethyl-2-methylpyrimidine (HMP). Is also able to catalyze the hydrolytic cleavage of thiamine; however, this thiaminase activity may not be physiologically relevant. Therefore, is probably involved in the regeneration of the thiamine pyrimidine from thiamine degraded products present in the environment, rather than in thiamine degradation. The sequence is that of Aminopyrimidine aminohydrolase from Staphylococcus aureus (strain MRSA252).